Reading from the N-terminus, the 1459-residue chain is DNA-binding protein RFX7 (1459 aa).

Residues 1–27 are disordered; that stretch reads MAEEQQQPPPQQLDAPQQLPLSAPNPG. The span at 12–21 shows a compositional bias: low complexity; the sequence is QLDAPQQLPL. Positions 108-183 form a DNA-binding region, RFX-type winged-helix; that stretch reads AFSWIRNTLE…YCYSGLRKKA (76 aa). Positions 188–193 match the PxLPxI/L motif; mediates interaction with ANKRA2 and RFXANK motif; the sequence is PTLPNL. 6 disordered regions span residues 303–347, 404–428, 482–590, 634–659, 688–716, and 918–1016; these read AKQQ…LPNG, SVKQTPKTPQNVPASPGGDRSARHR, PSNS…GVTE, FTSTSSPSNGDSVNKDPKICTKSPRK, GQKPGTVKKDQKVPHSGKTESSTAGAQIP, and SVTP…VPPS. 2 stretches are compositionally biased toward polar residues: residues 404-416 and 482-502; these read SVKQTPKTPQNVP and PSNSNAPLKHSASVSSATGTT. Positions 521–534 are enriched in low complexity; the sequence is SPGSRASSTGGTSA. The span at 537-549 shows a compositional bias: basic and acidic residues; sequence VKMEPEGSSDEHP. Polar residues-rich tracts occupy residues 562–578, 634–645, and 706–716; these read PLTTSSALWGQKSNTDG, FTSTSSPSNGDS, and TESSTAGAQIP. Residues 947–963 show a composition bias toward pro residues; that stretch reads TPTPTPTPTPTPTPTPT. Polar residues predominate over residues 971–1009; it reads GSQSLSRESPCSRLAQTTPVDSALGSSRHTPIGTPHSNC.

It belongs to the RFX family. In terms of assembly, interacts (via PxLPxI/L motif) with RFXANK (via ankyrin repeats). Interacts (via PxLPxI/L motif) with ANKRA2 (via ankyrin repeats). In terms of tissue distribution, expressed in spleen and lymph node and to a lower extend in brain (at protein level). Expressed in lymphoid organs and lymphoid cell subsets. Expressed throughout natural killer (NK) cell maturation.

Its subcellular location is the nucleus. Transcription factor. Acts as a transcriptional activator by binding to promoter regions of target genes, such as Rec8, Mxd4 and Ddit4. Plays a role in natural killer (NK) cell maintenance and immunity. May play a role in the process of ciliogenesis in the neural tube and neural tube closure. This chain is DNA-binding protein RFX7, found in Mus musculus (Mouse).